Here is a 340-residue protein sequence, read N- to C-terminus: uncharacterized protein (340 aa).

The interval 284-340 is disordered; it reads DHSTPTNYQQETPASQQQLDQENEPIKPSKKSNSSSLPRGTTQPKSNSINRVSKLID. 2 stretches are compositionally biased toward polar residues: residues 286-303 and 320-334; these read STPT…QQLD and LPRG…SINR.

This is an uncharacterized protein from Mycoplasma genitalium (strain ATCC 33530 / DSM 19775 / NCTC 10195 / G37) (Mycoplasmoides genitalium).